A 126-amino-acid polypeptide reads, in one-letter code: MQITLLKGKLHMASVTQAELWYDGSCAIDKDLVELAGFREFEQIDIYNVDNGERFHTYVILAESGSGTISMNGAAARKVQVGDRVIIAAYGQMNEAEADEFKPKLVYLNKDNSVERTTNTIPVQKD.

The active-site Schiff-base intermediate with substrate; via pyruvic acid is serine 25. Position 25 is a pyruvic acid (Ser) (serine 25). Threonine 57 contributes to the substrate binding site. The active-site Proton donor is tyrosine 58. 73–75 (GAA) contributes to the substrate binding site.

This sequence belongs to the PanD family. Heterooctamer of four alpha and four beta subunits. Pyruvate serves as cofactor. In terms of processing, is synthesized initially as an inactive proenzyme, which is activated by self-cleavage at a specific serine bond to produce a beta-subunit with a hydroxyl group at its C-terminus and an alpha-subunit with a pyruvoyl group at its N-terminus.

It localises to the cytoplasm. It catalyses the reaction L-aspartate + H(+) = beta-alanine + CO2. It functions in the pathway cofactor biosynthesis; (R)-pantothenate biosynthesis; beta-alanine from L-aspartate: step 1/1. Catalyzes the pyruvoyl-dependent decarboxylation of aspartate to produce beta-alanine. The chain is Aspartate 1-decarboxylase from Marinomonas sp. (strain MWYL1).